Consider the following 242-residue polypeptide: Orotidine 5'-phosphate decarboxylase (242 aa).

Residues aspartate 16, lysine 37, 64–73 (DLKFHDIPNT), threonine 128, arginine 190, glutamine 199, glycine 219, and arginine 220 each bind substrate. Lysine 66 serves as the catalytic Proton donor.

The protein belongs to the OMP decarboxylase family. Type 1 subfamily. Homodimer.

It catalyses the reaction orotidine 5'-phosphate + H(+) = UMP + CO2. It functions in the pathway pyrimidine metabolism; UMP biosynthesis via de novo pathway; UMP from orotate: step 2/2. Functionally, catalyzes the decarboxylation of orotidine 5'-monophosphate (OMP) to uridine 5'-monophosphate (UMP). This Prochlorococcus marinus (strain MIT 9312) protein is Orotidine 5'-phosphate decarboxylase.